The primary structure comprises 294 residues: Cytidine deaminase (294 aa).

2 consecutive CMP/dCMP-type deaminase domains span residues 48–168 (DEDA…FGPK) and 186–294 (LTGD…VLLG). Residue 89-91 (NME) coordinates substrate. Residue H102 participates in Zn(2+) binding. E104 serves as the catalytic Proton donor. Zn(2+) is bound by residues C129 and C132.

This sequence belongs to the cytidine and deoxycytidylate deaminase family. Homodimer. Zn(2+) serves as cofactor.

It catalyses the reaction cytidine + H2O + H(+) = uridine + NH4(+). The enzyme catalyses 2'-deoxycytidine + H2O + H(+) = 2'-deoxyuridine + NH4(+). Its function is as follows. This enzyme scavenges exogenous and endogenous cytidine and 2'-deoxycytidine for UMP synthesis. In Salmonella agona (strain SL483), this protein is Cytidine deaminase.